Here is a 496-residue protein sequence, read N- to C-terminus: tRNA-2-methylthio-N(6)-dimethylallyladenosine synthase (496 aa).

The MTTase N-terminal domain maps to 43-160; the sequence is KKVFVTTQGC…LPELYDQSHQ (118 aa). 6 residues coordinate [4Fe-4S] cluster: Cys52, Cys89, Cys123, Cys204, Cys208, and Cys211. The Radical SAM core domain maps to 190–422; that stretch reads RVEGFKAFVS…QKVIIDSTLA (233 aa). One can recognise a TRAM domain in the interval 425-493; it reads HEMVGTTTRV…PHMVKGEIEA (69 aa).

This sequence belongs to the methylthiotransferase family. MiaB subfamily. Monomer. The cofactor is [4Fe-4S] cluster.

The protein localises to the cytoplasm. The catalysed reaction is N(6)-dimethylallyladenosine(37) in tRNA + (sulfur carrier)-SH + AH2 + 2 S-adenosyl-L-methionine = 2-methylsulfanyl-N(6)-dimethylallyladenosine(37) in tRNA + (sulfur carrier)-H + 5'-deoxyadenosine + L-methionine + A + S-adenosyl-L-homocysteine + 2 H(+). Catalyzes the methylthiolation of N6-(dimethylallyl)adenosine (i(6)A), leading to the formation of 2-methylthio-N6-(dimethylallyl)adenosine (ms(2)i(6)A) at position 37 in tRNAs that read codons beginning with uridine. The protein is tRNA-2-methylthio-N(6)-dimethylallyladenosine synthase of Psychrobacter arcticus (strain DSM 17307 / VKM B-2377 / 273-4).